The sequence spans 1141 residues: PR domain zinc finger protein 15 (1141 aa).

Residues 49–159 (PNLEIRRLED…PGTELRVWYA (111 aa)) enclose the SET domain. A C2H2-type 1 zinc finger spans residues 197–219 (WACKVCSATFLELQLLNEHLLGH). Residues 224-283 (KSLPPGSQSEAAAPEKEQDTPRGEPPAVPESENVATKEQKKKPRRGRKPKVSKAEQPLVI) are disordered. Residues 236-245 (APEKEQDTPR) are compositionally biased toward basic and acidic residues. A compositionally biased stretch (basic residues) spans 262–274 (QKKKPRRGRKPKV). C2H2-type zinc fingers lie at residues 372–394 (YQCN…VRSH), 399–422 (FKCE…SYKH), 460–482 (FQCE…KKKH), and 487–509 (FACE…QRRH). Lys-517 participates in a covalent cross-link: Glycyl lysine isopeptide (Lys-Gly) (interchain with G-Cter in SUMO2). 2 consecutive C2H2-type zinc fingers follow at residues 536 to 558 (SGCP…LLTH) and 563 to 585 (YTCE…IHVH). The disordered stretch occupies residues 604–623 (IGISSEENDDNSDESADSEP). The span at 609 to 620 (EENDDNSDESAD) shows a compositional bias: acidic residues. 9 C2H2-type zinc fingers span residues 626–649 (YSCK…MEVH), 654–676 (YGCS…MVIH), 690–712 (HPCE…KLIH), 718–740 (HACE…MRVH), 746–768 (YLCA…MKLH), 774–796 (YECK…CKRH), 802–824 (FMCE…KLIH), 830–853 (WTCS…QLTH), and 859–882 (QSCQ…RRKH). Disordered regions lie at residues 922 to 973 (AEGK…DETN) and 1108 to 1141 (QTDV…MYSY). The segment covering 927 to 938 (GKAAKRSHKRKQ) has biased composition (basic residues). Positions 1121–1141 (PQQAAQPQVQAEQQQQQMYSY) are enriched in low complexity.

The protein belongs to the class V-like SAM-binding methyltransferase superfamily. Detected in all tissues examined.

It localises to the nucleus. Sequence-specific DNA-binding transcriptional regulator. Plays a role as a molecular node in a transcriptional network regulating embryonic development and cell fate decision. Stimulates the expression of upstream key transcriptional activators and repressors of the Wnt/beta-catenin and MAPK/ERK pathways, respectively, that are essential for naive pluripotency and self-renewal maintenance of embryonic stem cells (ESCs). Specifically promotes SPRY1 and RSPO1 transcription activation through recognition and direct binding of a specific DNA sequence in their promoter regions. Involved in early embryo development. Also plays a role in induced pluripotent stem cells (iPSCs) reprogramming. This is PR domain zinc finger protein 15 from Homo sapiens (Human).